The following is a 250-amino-acid chain: Small ribosomal subunit protein uS2 (250 aa).

The protein belongs to the universal ribosomal protein uS2 family.

This is Small ribosomal subunit protein uS2 from Paraburkholderia phymatum (strain DSM 17167 / CIP 108236 / LMG 21445 / STM815) (Burkholderia phymatum).